Reading from the N-terminus, the 329-residue chain is NTD biosynthesis operon regulator NtdR (329 aa).

The HTH lacI-type domain maps to 2 to 56; that stretch reads PTIDEIAKLCNVSKTTVSRVLNNHPYVSKEKRDMILKAINELDYTPNYLARNFRR. The segment at residues 4–23 is a DNA-binding region (H-T-H motif); the sequence is IDEIAKLCNVSKTTVSRVLN.

Functionally, positively regulates the ntdABC operon and negatively regulates its own transcription. Binds to NTD to induce ntdABC transcription. This Bacillus subtilis (strain 168) protein is NTD biosynthesis operon regulator NtdR (ntdR).